The following is a 263-amino-acid chain: Endonuclease 8 (263 aa).

Proline 2 acts as the Schiff-base intermediate with DNA in catalysis. The active-site Proton donor is the glutamate 3. Lysine 53 (proton donor; for beta-elimination activity) is an active-site residue. Positions 70, 125, and 169 each coordinate DNA. The segment at 229–263 (KVFHRDGEACERCGGIIEKTTLSSRPFYWCPHCQK) adopts an FPG-type zinc-finger fold. Arginine 253 acts as the Proton donor; for delta-elimination activity in catalysis.

This sequence belongs to the FPG family. Zn(2+) serves as cofactor.

The enzyme catalyses 2'-deoxyribonucleotide-(2'-deoxyribose 5'-phosphate)-2'-deoxyribonucleotide-DNA = a 3'-end 2'-deoxyribonucleotide-(2,3-dehydro-2,3-deoxyribose 5'-phosphate)-DNA + a 5'-end 5'-phospho-2'-deoxyribonucleoside-DNA + H(+). In terms of biological role, involved in base excision repair of DNA damaged by oxidation or by mutagenic agents. Acts as a DNA glycosylase that recognizes and removes damaged bases. Has a preference for oxidized pyrimidines, such as thymine glycol, 5,6-dihydrouracil and 5,6-dihydrothymine. Has AP (apurinic/apyrimidinic) lyase activity and introduces nicks in the DNA strand. Cleaves the DNA backbone by beta-delta elimination to generate a single-strand break at the site of the removed base with both 3'- and 5'-phosphates. This chain is Endonuclease 8, found in Salmonella agona (strain SL483).